The sequence spans 326 residues: Diphthine methyltransferase (326 aa).

4 WD repeats span residues 65–105 (MHCD…ELMF), 113–152 (DSSV…IKNK), 155–195 (EHDY…SCIW), and 293–326 (EHES…WEDI).

This sequence belongs to the DPH7 family.

It localises to the cytoplasm. The protein resides in the nucleus. It catalyses the reaction diphthine methyl ester-[translation elongation factor 2] + H2O = diphthine-[translation elongation factor 2] + methanol + H(+). It functions in the pathway protein modification; peptidyl-diphthamide biosynthesis. Functionally, catalyzes the demethylation of diphthine methyl ester to form diphthine, an intermediate in diphthamide biosynthesis, a post-translational modification of histidine which occurs in translation elongation factor 2 (eft201 and eft202). This is Diphthine methyltransferase (rrt2) from Schizosaccharomyces pombe (strain 972 / ATCC 24843) (Fission yeast).